Here is a 376-residue protein sequence, read N- to C-terminus: 5-amino-6-(D-ribitylamino)uracil--L-tyrosine 4-hydroxyphenyl transferase 1 (376 aa).

Positions Val-50 to His-284 constitute a Radical SAM core domain. Residues Cys-64, Cys-68, and Cys-71 each coordinate [4Fe-4S] cluster.

This sequence belongs to the radical SAM superfamily. CofH family. As to quaternary structure, consists of two subunits, CofG and CofH. [4Fe-4S] cluster serves as cofactor.

It catalyses the reaction 5-amino-6-(D-ribitylamino)uracil + L-tyrosine + S-adenosyl-L-methionine = 5-amino-5-(4-hydroxybenzyl)-6-(D-ribitylimino)-5,6-dihydrouracil + 2-iminoacetate + 5'-deoxyadenosine + L-methionine + H(+). Its pathway is cofactor biosynthesis; coenzyme F0 biosynthesis. In terms of biological role, catalyzes the radical-mediated synthesis of 5-amino-5-(4-hydroxybenzyl)-6-(D-ribitylimino)-5,6-dihydrouracil from 5-amino-6-(D-ribitylamino)uracil and L-tyrosine. This chain is 5-amino-6-(D-ribitylamino)uracil--L-tyrosine 4-hydroxyphenyl transferase 1, found in Methanosarcina barkeri (strain Fusaro / DSM 804).